The following is a 99-amino-acid chain: Probable non-specific lipid-transfer protein AKCS9 (99 aa).

The signal sequence occupies residues Met-1 to Thr-33. Intrachain disulfides connect Cys-34/Cys-68, Cys-42/Cys-56, Cys-57/Cys-92, and Cys-66/Cys-99.

It belongs to the plant LTP family. In terms of tissue distribution, expressed in most tissues except nodules.

Potential lipid transfer protein. The chain is Probable non-specific lipid-transfer protein AKCS9 from Vigna unguiculata (Cowpea).